Here is a 338-residue protein sequence, read N- to C-terminus: Phenylalanine--tRNA ligase alpha subunit (338 aa).

A Mg(2+)-binding site is contributed by glutamate 252.

The protein belongs to the class-II aminoacyl-tRNA synthetase family. Phe-tRNA synthetase alpha subunit type 1 subfamily. Tetramer of two alpha and two beta subunits. The cofactor is Mg(2+).

It localises to the cytoplasm. It catalyses the reaction tRNA(Phe) + L-phenylalanine + ATP = L-phenylalanyl-tRNA(Phe) + AMP + diphosphate + H(+). The protein is Phenylalanine--tRNA ligase alpha subunit of Pseudomonas paraeruginosa (strain DSM 24068 / PA7) (Pseudomonas aeruginosa (strain PA7)).